We begin with the raw amino-acid sequence, 92 residues long: YcgL domain-containing protein Shewmr7_2249 (92 aa).

One can recognise a YcgL domain in the interval 1–85 (MLCAVYKSSR…PQVNLLAEHR (85 aa)).

This chain is YcgL domain-containing protein Shewmr7_2249, found in Shewanella sp. (strain MR-7).